Here is a 458-residue protein sequence, read N- to C-terminus: UPF0210 protein Maeo_1412 (458 aa).

This sequence belongs to the UPF0210 family.

The polypeptide is UPF0210 protein Maeo_1412 (Methanococcus aeolicus (strain ATCC BAA-1280 / DSM 17508 / OCM 812 / Nankai-3)).